Consider the following 259-residue polypeptide: Indole-3-glycerol phosphate synthase (259 aa).

It belongs to the TrpC family.

It carries out the reaction 1-(2-carboxyphenylamino)-1-deoxy-D-ribulose 5-phosphate + H(+) = (1S,2R)-1-C-(indol-3-yl)glycerol 3-phosphate + CO2 + H2O. Its pathway is amino-acid biosynthesis; L-tryptophan biosynthesis; L-tryptophan from chorismate: step 4/5. The protein is Indole-3-glycerol phosphate synthase of Dehalococcoides mccartyi (strain ATCC BAA-2266 / KCTC 15142 / 195) (Dehalococcoides ethenogenes (strain 195)).